Reading from the N-terminus, the 269-residue chain is Tryptophan synthase alpha chain (269 aa).

Active-site proton acceptor residues include Glu49 and Asp60.

Belongs to the TrpA family. As to quaternary structure, tetramer of two alpha and two beta chains.

The catalysed reaction is (1S,2R)-1-C-(indol-3-yl)glycerol 3-phosphate + L-serine = D-glyceraldehyde 3-phosphate + L-tryptophan + H2O. Its pathway is amino-acid biosynthesis; L-tryptophan biosynthesis; L-tryptophan from chorismate: step 5/5. The alpha subunit is responsible for the aldol cleavage of indoleglycerol phosphate to indole and glyceraldehyde 3-phosphate. This chain is Tryptophan synthase alpha chain, found in Acidovorax sp. (strain JS42).